The primary structure comprises 155 residues: Short-chain-enoyl-CoA hydratase (155 aa).

This sequence belongs to the enoyl-CoA hydratase/isomerase family.

It catalyses the reaction a short-chain (3S)-3-hydroxyacyl-CoA = a short-chain (2E)-enoyl-CoA + H2O. Its pathway is lipid metabolism; butanoate metabolism. This chain is Short-chain-enoyl-CoA hydratase (crt), found in Clostridioides difficile (Peptoclostridium difficile).